The chain runs to 557 residues: Small ribosomal subunit protein bS1 (557 aa).

S1 motif domains are found at residues 21 to 87, 105 to 171, 192 to 260, and 277 to 347; these read GSIV…LSRE, AETV…VSRR, GMEV…LGLK, and GTKL…LGLK. Lysine 229, lysine 279, and lysine 363 each carry N6-acetyllysine. S1 motif domains are found at residues 364 to 434 and 451 to 520; these read GDRV…LGVK and GAIV…LSVR.

The protein belongs to the bacterial ribosomal protein bS1 family. In terms of assembly, part of the 30S ribosomal subunit. Some nascent polypeptide chains are able to cross-link to this protein in situ. Can be cross-linked to mRNA in the ribosome. In terms of processing, phosphorylated; probably on a serine.

Its function is as follows. Required for translation of most natural mRNAs except for leaderless mRNA. Binds mRNA upstream of the Shine-Dalgarno (SD) sequence and helps it bind to the 30S ribosomal subunit; acts as an RNA chaperone to unfold structured mRNA on the ribosome but is not essential for mRNAs with strong SDs and little 5'-UTR structure, thus it may help fine-tune which mRNAs that are translated. Unwinds dsRNA by binding to transiently formed ssRNA regions; binds about 10 nucleotides. Has a preference for polypyrimidine tracts. Negatively autoregulates its own translation. The sequence is that of Small ribosomal subunit protein bS1 (rpsA) from Escherichia coli O157:H7.